The primary structure comprises 113 residues: Molt-inhibiting hormone (113 aa).

The first 35 residues, 1-35, serve as a signal peptide directing secretion; sequence MMSRTESRYSSQRTWLLSMVVLAALWSISVQRATA. 3 disulfide bridges follow: C42–C79, C59–C75, and C62–C88.

Belongs to the arthropod CHH/MIH/GIH/VIH hormone family.

It localises to the secreted. Inhibits Y-organs where molting hormone (ecdysteroid) is secreted. A molting cycle is initiated when MIH secretion diminishes or stops. The polypeptide is Molt-inhibiting hormone (Metacarcinus magister (Dungeness crab)).